The chain runs to 339 residues: Fructose-1,6-bisphosphatase isozyme 2 (339 aa).

An important for interaction with ALDOA region spans residues 3–10 (DRSPFETD). Residues valine 18 and 28–32 (TGELT) each bind AMP. Mg(2+) is bound by residues aspartate 69 and glutamate 98. 113 to 114 (KY) lines the AMP pocket. 3 residues coordinate Mg(2+): aspartate 119, leucine 121, and aspartate 122. Aspartate 122 is a binding site for substrate. Arginine 141 contributes to the AMP binding site. The Nuclear localization signal signature appears at 204–208 (KKKGK). 213-216 (NEGY) is a substrate binding site. Phosphotyrosine is present on residues tyrosine 216 and tyrosine 219. Substrate is bound by residues 245–249 (YVGSM), tyrosine 265, and lysine 275. Position 281 (glutamate 281) interacts with Mg(2+).

It belongs to the FBPase class 1 family. As to quaternary structure, homotetramer. Interacts with ALDOA; the interaction blocks inhibition by physiological concentrations of AMP and reduces inhibition by Ca(2+). Interacts with alpha-actinin and F-actin. It depends on Mg(2+) as a cofactor.

Its subcellular location is the cell junction. The protein resides in the cytoplasm. It localises to the nucleus. It is found in the myofibril. The protein localises to the sarcomere. Its subcellular location is the z line. It catalyses the reaction beta-D-fructose 1,6-bisphosphate + H2O = beta-D-fructose 6-phosphate + phosphate. It participates in carbohydrate biosynthesis; gluconeogenesis. With respect to regulation, subject to complex allosteric regulation. The enzyme can assume an active R-state, or an inactive T-state. Intermediate conformations may exist. AMP acts as an allosteric inhibitor. Fructose 2,6-bisphosphate acts as a competitive inhibitor. Strongly inhibited by Ca(2+). Catalyzes the hydrolysis of fructose 1,6-bisphosphate to fructose 6-phosphate in the presence of divalent cations and probably participates in glycogen synthesis from carbohydrate precursors, such as lactate. This chain is Fructose-1,6-bisphosphatase isozyme 2 (Fbp2), found in Rattus norvegicus (Rat).